The sequence spans 283 residues: Pantothenate synthetase (283 aa).

Position 31 to 38 (31 to 38 (MGALHDGH)) interacts with ATP. The active-site Proton donor is the His-38. Residue Gln-62 participates in (R)-pantoate binding. Residue Gln-62 participates in beta-alanine binding. An ATP-binding site is contributed by 148-151 (GKKD). Gln-154 is a binding site for (R)-pantoate. ATP contacts are provided by residues Val-177 and 185-188 (KSSR).

This sequence belongs to the pantothenate synthetase family. In terms of assembly, homodimer.

It is found in the cytoplasm. It carries out the reaction (R)-pantoate + beta-alanine + ATP = (R)-pantothenate + AMP + diphosphate + H(+). Its pathway is cofactor biosynthesis; (R)-pantothenate biosynthesis; (R)-pantothenate from (R)-pantoate and beta-alanine: step 1/1. In terms of biological role, catalyzes the condensation of pantoate with beta-alanine in an ATP-dependent reaction via a pantoyl-adenylate intermediate. In Staphylococcus aureus (strain USA300), this protein is Pantothenate synthetase.